A 599-amino-acid chain; its full sequence is Adenine deaminase (599 aa).

It belongs to the metallo-dependent hydrolases superfamily. Adenine deaminase family. The cofactor is Mn(2+).

It carries out the reaction adenine + H2O + H(+) = hypoxanthine + NH4(+). The protein is Adenine deaminase of Clostridium botulinum (strain 657 / Type Ba4).